The sequence spans 600 residues: MFPRVVRLNSRLVSFALLGLQIANGAITYQHPDDLPSNVNYDFIVAGGGTAGLVVASRLSENSDWNILVIEAGPSNKDTPETRVPGLADSLPGSRTDWNYTTIPQDALGGRSLNYSRAKVLGGCSTHNGMVYTRGSEDDWNYWAEVTGDQALSWDSVLPIMKKAEKFSQDFSDQSVDGHIDPAVHGRDGLLSVVASYTNVSFNDLLLQTTKELSDEFPFKLDLNDGKPHELAWTQYTIDHNAERSSSATSYLETTGDNVHVLVNTHVTRIVSAGNGTNFRSVEFAVDSNSPKKVLQAKKELILSAGVIASPQVLMNSGIGGREELQAIGVDTLIDNPSVGKNLSDQAATLLMFDTTLPNTDYDVAAALTEWDKSRSGPMAHGARLNHLTWVRLPDDKLNGSDPSSGKDSPHIEFQFRQISHQLPPADVPNQVQLPDPDSIGVVLQFSVVNLYSISPGSVILNDNDPFANPMIDLNMFGDQKDIAILREGVRSARRMFSSPAFKDVINGTVYPPADVTSDEDLDAFLRTSAESYWHGVGTLSMSPQNASWGVVNPDFRVKGTSGLRVVDASVIPRAPAGHTQVPVYTFAEHASVLIAASYH.

A signal peptide spans 1–25 (MFPRVVRLNSRLVSFALLGLQIANG). Residues asparagine 99 and asparagine 114 are each glycosylated (N-linked (GlcNAc...) asparagine). Histidine 127 carries the tele-8alpha-FAD histidine modification. Asparagine 199, asparagine 275, asparagine 342, asparagine 399, and asparagine 507 each carry an N-linked (GlcNAc...) asparagine glycan. The Proton acceptor role is filled by histidine 535. Asparagine 546 carries an N-linked (GlcNAc...) asparagine glycan. Histidine 579 is an active-site residue.

It belongs to the GMC oxidoreductase family. As to quaternary structure, monomer. The cofactor is FAD. N-glycosylated.

It localises to the secreted. It catalyses the reaction pyranose + acceptor = pyranos-2-ulose + reduced acceptor.. The enzyme catalyses pyranose + acceptor = pyranos-3-ulose + reduced acceptor.. The catalysed reaction is pyranose + acceptor = pyranos-2,3-diulose + reduced acceptor.. It carries out the reaction a pyranoside + acceptor = a pyranosid-3-ulose + reduced acceptor.. It catalyses the reaction a pyranoside + acceptor = a pyranosid-3,4-diulose + reduced acceptor.. In terms of biological role, catalyzes the single-oxidation or sequential double oxidation reaction of carbohydrates primarily at carbon-2 and/or carbon-3 with the concomitant reduction of the flavin. The enzyme exhibits a broad sugar substrate specificity, oxidizing different aldopyranoses to the corresponding C-1, C-2, C-3 or C-1,2, C-2,3 and C-3,4 (di)dehydro sugars with substrate-specific regioselectivity. Accepts only a narrow range of electron acceptors such as substituted benzoquinones and complexed metal ions and reacts extremely slowly with O(2) as acceptor. May play a role in the natural recycling of plant matter by oxidizing all major monosaccharides in lignocellulose and by reducing quinone compounds or reactive radical species generated during lignin depolymerization. The polypeptide is Pyranose dehydrogenase (Agaricus xanthodermus (Poison yellow meadow mushroom)).